Consider the following 324-residue polypeptide: Phospho-N-acetylmuramoyl-pentapeptide-transferase (324 aa).

The next 9 helical transmembrane spans lie at 13 to 33 (VLSALLMGFAFSMVLGPIFIP), 57 to 77 (GTPTMGGLIFFISVSVTMLII), 85 to 105 (GMIVLYSLIAFGIIGFLDDIL), 121 to 141 (MILLLLFSIALAYYGYTNIGT), 143 to 163 (IIIPFMNSKLNLGIFYIPLVV), 179 to 199 (IDGLASSVTVIVLTFFAIVGF), 201 to 221 (TGHYQVGVFSIALAGALLGFL), 238 to 260 (LALGGAIATIALILKMPLFIIIV), and 303 to 323 (VKLVTVFSIITLILCIIGFIA).

This sequence belongs to the glycosyltransferase 4 family. MraY subfamily. Mg(2+) serves as cofactor.

The protein localises to the cell membrane. It carries out the reaction UDP-N-acetyl-alpha-D-muramoyl-L-alanyl-gamma-D-glutamyl-meso-2,6-diaminopimeloyl-D-alanyl-D-alanine + di-trans,octa-cis-undecaprenyl phosphate = di-trans,octa-cis-undecaprenyl diphospho-N-acetyl-alpha-D-muramoyl-L-alanyl-D-glutamyl-meso-2,6-diaminopimeloyl-D-alanyl-D-alanine + UMP. It participates in cell wall biogenesis; peptidoglycan biosynthesis. Functionally, catalyzes the initial step of the lipid cycle reactions in the biosynthesis of the cell wall peptidoglycan: transfers peptidoglycan precursor phospho-MurNAc-pentapeptide from UDP-MurNAc-pentapeptide onto the lipid carrier undecaprenyl phosphate, yielding undecaprenyl-pyrophosphoryl-MurNAc-pentapeptide, known as lipid I. The sequence is that of Phospho-N-acetylmuramoyl-pentapeptide-transferase from Clostridium botulinum (strain Eklund 17B / Type B).